Reading from the N-terminus, the 503-residue chain is 3-octaprenyl-4-hydroxybenzoate carboxy-lyase (503 aa).

Asparagine 176 provides a ligand contact to Mn(2+). Residues 179-181, 193-195, and 198-199 contribute to the prenylated FMN site; these read IYR, RWL, and RG. Glutamate 242 contributes to the Mn(2+) binding site. The active-site Proton donor is the aspartate 303.

This sequence belongs to the UbiD family. In terms of assembly, homohexamer. Prenylated FMN serves as cofactor. It depends on Mn(2+) as a cofactor.

It localises to the cell membrane. It carries out the reaction a 4-hydroxy-3-(all-trans-polyprenyl)benzoate + H(+) = a 2-(all-trans-polyprenyl)phenol + CO2. It participates in cofactor biosynthesis; ubiquinone biosynthesis. In terms of biological role, catalyzes the decarboxylation of 3-octaprenyl-4-hydroxy benzoate to 2-octaprenylphenol, an intermediate step in ubiquinone biosynthesis. This is 3-octaprenyl-4-hydroxybenzoate carboxy-lyase from Ralstonia nicotianae (strain ATCC BAA-1114 / GMI1000) (Ralstonia solanacearum).